Consider the following 158-residue polypeptide: Transcription elongation factor GreA (158 aa).

This sequence belongs to the GreA/GreB family.

Functionally, necessary for efficient RNA polymerase transcription elongation past template-encoded arresting sites. The arresting sites in DNA have the property of trapping a certain fraction of elongating RNA polymerases that pass through, resulting in locked ternary complexes. Cleavage of the nascent transcript by cleavage factors such as GreA or GreB allows the resumption of elongation from the new 3'terminus. GreA releases sequences of 2 to 3 nucleotides. This is Transcription elongation factor GreA from Pelobacter propionicus (strain DSM 2379 / NBRC 103807 / OttBd1).